The chain runs to 485 residues: Glutamate--tRNA ligase (485 aa).

Residues 11 to 21 carry the 'HIGH' region motif; that stretch reads PSPTGHLHIGN. The 'KMSKS' region signature appears at 252–256; the sequence is KLSKR. Lys255 is a binding site for ATP.

The protein belongs to the class-I aminoacyl-tRNA synthetase family. Glutamate--tRNA ligase type 1 subfamily. Monomer.

It is found in the cytoplasm. The enzyme catalyses tRNA(Glu) + L-glutamate + ATP = L-glutamyl-tRNA(Glu) + AMP + diphosphate. Catalyzes the attachment of glutamate to tRNA(Glu) in a two-step reaction: glutamate is first activated by ATP to form Glu-AMP and then transferred to the acceptor end of tRNA(Glu). This chain is Glutamate--tRNA ligase, found in Bacillus licheniformis (strain ATCC 14580 / DSM 13 / JCM 2505 / CCUG 7422 / NBRC 12200 / NCIMB 9375 / NCTC 10341 / NRRL NRS-1264 / Gibson 46).